We begin with the raw amino-acid sequence, 113 residues long: Cytochrome c (113 aa).

The residue at position 1 (alanine 1) is an N-acetylalanine. Cysteine 22, cysteine 25, and histidine 26 together coordinate heme c. An N6,N6,N6-trimethyllysine modification is found at lysine 80. Heme c is bound at residue methionine 88. Lysine 94 is subject to N6,N6,N6-trimethyllysine.

Belongs to the cytochrome c family. Post-translationally, binds 1 heme c group covalently per subunit.

It is found in the mitochondrion intermembrane space. Functionally, electron carrier protein. The oxidized form of the cytochrome c heme group can accept an electron from the heme group of the cytochrome c1 subunit of cytochrome reductase. Cytochrome c then transfers this electron to the cytochrome oxidase complex, the final protein carrier in the mitochondrial electron-transport chain. This is Cytochrome c from Ginkgo biloba (Ginkgo).